Reading from the N-terminus, the 639-residue chain is Threonine--tRNA ligase (639 aa).

The TGS domain maps to methionine 1–threonine 61. The catalytic stretch occupies residues aspartate 242–proline 533. Positions 333, 384, and 510 each coordinate Zn(2+).

It belongs to the class-II aminoacyl-tRNA synthetase family. Homodimer. The cofactor is Zn(2+).

The protein localises to the cytoplasm. The catalysed reaction is tRNA(Thr) + L-threonine + ATP = L-threonyl-tRNA(Thr) + AMP + diphosphate + H(+). Functionally, catalyzes the attachment of threonine to tRNA(Thr) in a two-step reaction: L-threonine is first activated by ATP to form Thr-AMP and then transferred to the acceptor end of tRNA(Thr). Also edits incorrectly charged L-seryl-tRNA(Thr). This is Threonine--tRNA ligase from Acidovorax sp. (strain JS42).